The chain runs to 199 residues: UPF0637 protein YsbB (199 aa).

It belongs to the UPF0637 family.

In Lactococcus lactis subsp. lactis (strain IL1403) (Streptococcus lactis), this protein is UPF0637 protein YsbB (ysbB).